Here is a 189-residue protein sequence, read N- to C-terminus: Mediator of RNA polymerase II transcription subunit 10b (189 aa).

Residues 1–22 (MDPTQNTSAGIGGSNGTIRYQT) are disordered.

Belongs to the Mediator complex subunit 10 family. In terms of assembly, component of the Mediator complex.

The protein localises to the nucleus. In terms of biological role, component of the Mediator complex, a coactivator involved in the regulated transcription of nearly all RNA polymerase II-dependent genes. Mediator functions as a bridge to convey information from gene-specific regulatory proteins to the basal RNA polymerase II transcription machinery. The Mediator complex, having a compact conformation in its free form, is recruited to promoters by direct interactions with regulatory proteins and serves for the assembly of a functional preinitiation complex with RNA polymerase II and the general transcription factors. This Arabidopsis thaliana (Mouse-ear cress) protein is Mediator of RNA polymerase II transcription subunit 10b (MED10B).